Consider the following 223-residue polypeptide: ATP-dependent dethiobiotin synthetase BioD (223 aa).

Thr16 is a binding site for Mg(2+). The active site involves Lys37. Ser41 contacts substrate. Mg(2+) is bound by residues Asp50 and Glu111. ATP is bound by residues Asp50, 111-114 (EGAG), and 171-172 (NR).

Belongs to the dethiobiotin synthetase family. Homodimer. Requires Mg(2+) as cofactor.

It is found in the cytoplasm. It carries out the reaction (7R,8S)-7,8-diammoniononanoate + CO2 + ATP = (4R,5S)-dethiobiotin + ADP + phosphate + 3 H(+). It functions in the pathway cofactor biosynthesis; biotin biosynthesis; biotin from 7,8-diaminononanoate: step 1/2. Catalyzes a mechanistically unusual reaction, the ATP-dependent insertion of CO2 between the N7 and N8 nitrogen atoms of 7,8-diaminopelargonic acid (DAPA, also called 7,8-diammoniononanoate) to form a ureido ring. The sequence is that of ATP-dependent dethiobiotin synthetase BioD from Anaeromyxobacter sp. (strain K).